A 56-amino-acid polypeptide reads, in one-letter code: Turripeptide XIV-01 (56 aa).

The N-terminal stretch at 1 to 21 is a signal peptide; the sequence is MRFHVLLTVALLLTSLMSIEA. Residues 22 to 30 constitute a propeptide that is removed on maturation; the sequence is KPVNGAEME.

In terms of processing, contains 2 disulfide bonds. In terms of tissue distribution, expressed by the venom duct.

It is found in the secreted. In Gemmula speciosa (Splendid gem-turris), this protein is Turripeptide XIV-01.